We begin with the raw amino-acid sequence, 163 residues long: MASTYSFDIVSDFDRQELVNAVDQARREIKQRYDLKDTQTEIELEEGSLTITTANDMALNSIRDLLLTKAAKRGLSLKIFDFQPPESAGGNRVRQVVHLKKGIDATLAKQIAKQIRDNFKKVQPAIQGDLVRVSGKDKDELQAVIQMLRQQDYPVALQFVNYR.

It belongs to the YajQ family.

Functionally, nucleotide-binding protein. In Synechococcus sp. (strain JA-2-3B'a(2-13)) (Cyanobacteria bacterium Yellowstone B-Prime), this protein is Nucleotide-binding protein CYB_0891.